A 280-amino-acid chain; its full sequence is Transcription factor HES-1 (280 aa).

The interval 1–44 (MPADIMEKNSSSPVAATPASVNTTPDKPKTASEHRKSSKPIMEK) is disordered. Residues 10-21 (SSSPVAATPASV) show a composition bias toward low complexity. Over residues 26–35 (DKPKTASEHR) the composition is skewed to basic and acidic residues. In terms of domain architecture, bHLH spans 34–91 (HRKSSKPIMEKRRRARINESLSQLKTLILDALKKDSSRHSKLEKADILEMTVKHLRNL). Residues 110–143 (YRAGFSECMNEVTRFLSTCEGVNTEVRTRLLGHL) enclose the Orange domain. 2 disordered regions span residues 157 to 200 (GQPH…PPGG) and 254 to 280 (TSVG…PWRN). Composition is skewed to pro residues over residues 164–174 (QAPPPPPPGPG) and 181–200 (FAPP…PPGG). Positions 254-271 (TSVGPNAVSPSSGPSLTA) are enriched in polar residues. A WRPW motif motif is present at residues 275 to 278 (WRPW).

Transcription repression requires formation of a complex with a corepressor protein of the Groucho/TLE family. Interacts (via WPRW motif) with TLE1, and more weakly with TLE2. Interacts with HES6. Interacts with SIRT1. Interacts with an FA complex, composed of FANCA, FANCF, FANCG and FANCL, but not of FANCC, nor FANCE. Post-translationally, (Microbial infection) Ubiquitinated via human cytomegalovirus/HCMV protein IE1 that assembles a HES1 ubiquitination complex; leading to HES1 proteasomal degradation.

Its subcellular location is the nucleus. Transcriptional repressor of genes that require a bHLH protein for their transcription. May act as a negative regulator of myogenesis by inhibiting the functions of MYOD1 and ASH1. Binds DNA on N-box motifs: 5'-CACNAG-3' with high affinity and on E-box motifs: 5'-CANNTG-3' with low affinity. May play a role in a functional FA core complex response to DNA cross-link damage, being required for the stability and nuclear localization of FA core complex proteins, as well as for FANCD2 monoubiquitination in response to DNA damage. This Homo sapiens (Human) protein is Transcription factor HES-1 (HES1).